The primary structure comprises 361 residues: Epi-isozizaene synthase (361 aa).

Positions 99, 103, 240, 244, and 248 each coordinate Mg(2+). Residues 99 to 103 carry the DDXXD motif motif; that stretch reads DDRHD.

The protein belongs to the terpene synthase family. Mg(2+) serves as cofactor. Requires Mn(2+) as cofactor. It depends on Fe(3+) as a cofactor.

The enzyme catalyses (2E,6E)-farnesyl diphosphate = (+)-epi-isozizaene + diphosphate. Its pathway is sesquiterpene biosynthesis; epi-isozizaene biosynthesis. Its function is as follows. Catalyzes the cyclization of farnesyl diphosphate (FPP) to the sesquiterpene epi-isozizaene. The protein is Epi-isozizaene synthase (cyc1) of Streptomyces coelicolor (strain ATCC BAA-471 / A3(2) / M145).